A 298-amino-acid chain; its full sequence is MIREPQKSAKAASKSSAPRARSSVAKATSTKATSSKAASSKAAPSKAGADAGAAKPRTKGLGKGVIAVAQPSFRRERALIKRGVWPVAGCDEAGRGPLAGPVVAAAVVLDPKRVPKGLDDSKRLTADRREELFEEICATAQVAVAYASPERINRDNILRASLWALTRAVHALPDLPQHVFVDGRDRLATRCESEAVVGGDGLIASIAAASIIAKVSRDRLMCRLAQECPGYGFESHKGYGVPEHLAALARLGPTVHHRRFFAPVAAAWRKIEGVPAEQTGVTGDLFETPVDAGIAATL.

A disordered region spans residues 1-57; that stretch reads MIREPQKSAKAASKSSAPRARSSVAKATSTKATSSKAASSKAAPSKAGADAGAAKPR. Residues 8–55 show a composition bias toward low complexity; it reads SAKAASKSSAPRARSSVAKATSTKATSSKAASSKAAPSKAGADAGAAK. The region spanning 85 to 273 is the RNase H type-2 domain; sequence WPVAGCDEAG…VAAAWRKIEG (189 aa). A divalent metal cation contacts are provided by Asp91, Glu92, and Asp182.

This sequence belongs to the RNase HII family. The cofactor is Mn(2+). It depends on Mg(2+) as a cofactor.

The protein localises to the cytoplasm. It carries out the reaction Endonucleolytic cleavage to 5'-phosphomonoester.. In terms of biological role, endonuclease that specifically degrades the RNA of RNA-DNA hybrids. This chain is Ribonuclease HII, found in Rhodopseudomonas palustris (strain BisB5).